Consider the following 262-residue polypeptide: UPF0739 protein C1orf74 homolog (262 aa).

This sequence belongs to the UPF0739 family.

This chain is UPF0739 protein C1orf74 homolog, found in Xenopus laevis (African clawed frog).